Reading from the N-terminus, the 439-residue chain is UPF0229 protein Nham_0975 (439 aa).

The interval 39 to 106 is disordered; the sequence is RSGRISDADG…AGTPDPSMKD (68 aa). Positions 58–76 are enriched in basic and acidic residues; sequence STDEPRFEAAKDSGRREHV.

The protein belongs to the UPF0229 family.

This Nitrobacter hamburgensis (strain DSM 10229 / NCIMB 13809 / X14) protein is UPF0229 protein Nham_0975.